We begin with the raw amino-acid sequence, 300 residues long: Acetylglutamate kinase (300 aa).

Substrate-binding positions include 72-73 (GG), Arg94, and Asn197.

It belongs to the acetylglutamate kinase family. ArgB subfamily.

Its subcellular location is the cytoplasm. It catalyses the reaction N-acetyl-L-glutamate + ATP = N-acetyl-L-glutamyl 5-phosphate + ADP. Its pathway is amino-acid biosynthesis; L-arginine biosynthesis; N(2)-acetyl-L-ornithine from L-glutamate: step 2/4. In terms of biological role, catalyzes the ATP-dependent phosphorylation of N-acetyl-L-glutamate. In Azoarcus sp. (strain BH72), this protein is Acetylglutamate kinase.